Reading from the N-terminus, the 505-residue chain is MAQIDFRKKINWHRRYRSPQGVKTEHEILRIFESDRGRIINSPAIRRLQQKTQVFPLERNAAVRTRLTHSMEVQQVGRYIAKEILSRLKELKLLEAYGLDELTGPFESIVEMSCLMHDIGNPPFGHFGEAAINDWFRQRLYPEDAESQPLTDDRCSVAALRLRDGEEPLNELRRKIRQDLCHFEGNAQGIRLVHTLMRMNLTWAQVGGILKYTRPAWWRGETPETHHYLMKKPGYYLSEEAYIARLRKELNLALYSRFPLTWIMEAADDISYCVADLEDAVEKRIFTVEQLYHHLHEAWGQHEKGSLFSLVVENAWEKSRSNSLSRSTEDQFFMYLRVNTLNKLVPYAAQRFIDNLPAIFAGTFNHALLEDASECSDLLKLYKNVAVKHVFSHPDVEQLELQGYRVISGLLEIYRPLLSLSLSDFTELVEKERVKRFPIESRLFHKLSTRHRLAYVEAVSKLPSDSPEFPLWEYYYRCRLLQDYISGMTDLYAWDEYRRLMAVEQ.

Residues 66 to 273 form the HD domain; the sequence is RLTHSMEVQQ…MEAADDISYC (208 aa).

The protein belongs to the dGTPase family. Type 1 subfamily. Homotetramer. The cofactor is Mg(2+).

The catalysed reaction is dGTP + H2O = 2'-deoxyguanosine + triphosphate + H(+). Its function is as follows. dGTPase preferentially hydrolyzes dGTP over the other canonical NTPs. The chain is Deoxyguanosinetriphosphate triphosphohydrolase from Escherichia coli O139:H28 (strain E24377A / ETEC).